A 145-amino-acid chain; its full sequence is D-aminoacyl-tRNA deacylase (145 aa).

Residues 137-138 carry the Gly-cisPro motif, important for rejection of L-amino acids motif; the sequence is GP.

It belongs to the DTD family. In terms of assembly, homodimer.

The protein localises to the cytoplasm. The catalysed reaction is glycyl-tRNA(Ala) + H2O = tRNA(Ala) + glycine + H(+). The enzyme catalyses a D-aminoacyl-tRNA + H2O = a tRNA + a D-alpha-amino acid + H(+). Its function is as follows. An aminoacyl-tRNA editing enzyme that deacylates mischarged D-aminoacyl-tRNAs. Also deacylates mischarged glycyl-tRNA(Ala), protecting cells against glycine mischarging by AlaRS. Acts via tRNA-based rather than protein-based catalysis; rejects L-amino acids rather than detecting D-amino acids in the active site. By recycling D-aminoacyl-tRNA to D-amino acids and free tRNA molecules, this enzyme counteracts the toxicity associated with the formation of D-aminoacyl-tRNA entities in vivo and helps enforce protein L-homochirality. The protein is D-aminoacyl-tRNA deacylase of Escherichia coli O7:K1 (strain IAI39 / ExPEC).